The following is an 88-amino-acid chain: Kunitz-type U15-theraphotoxin-Hhn1d (88 aa).

The N-terminal stretch at 1–27 (MGTARFLRAVLLLSVLLMVTFPALLSA) is a signal peptide. Residues 28–33 (EHHDGR) constitute a propeptide that is removed on maturation. Positions 37–85 (CRLPSDSGECSRFFGMWYFDGTTCTKFVYGGYGGNDNRFPTEKACMKRC) constitute a BPTI/Kunitz inhibitor domain. 2 disulfides stabilise this stretch: C37/C85 and C60/C81.

It belongs to the venom Kunitz-type family. 03 (sub-Kunitz) subfamily. Expressed by the venom gland.

The protein localises to the secreted. In terms of biological role, serine protease inhibitor that inhibits trypsin at a molar ratio of 1:1. The protein is Kunitz-type U15-theraphotoxin-Hhn1d of Cyriopagopus hainanus (Chinese bird spider).